The following is a 153-amino-acid chain: Arachidonate 5-lipoxygenase-activating protein (153 aa).

Residues 1-8 (MDQETVGN) lie on the Lumenal side of the membrane. A helical transmembrane segment spans residues 9–30 (VVLLAIVTLISVVQNGFFAHKV). The Cytoplasmic segment spans residues 31-52 (EHESRTQNGRSFQRTGTLAFER). Residues 53–77 (VYTANQNCVDAYPTFLAVLWSAGLL) form a helical membrane-spanning segment. The Lumenal portion of the chain corresponds to 78 to 80 (CSQ). A helical transmembrane segment spans residues 81-102 (VPAAFAGLMYLLVRQKYFVGYL). Topologically, residues 103–107 (GERTQ) are cytoplasmic. The stretch at 108-115 (STPGYIFG) is an intramembrane region. A helical transmembrane segment spans residues 116–128 (KRIILFLFLMSVA). The Lumenal portion of the chain corresponds to 129–153 (GIFNYYLIFFFGSDFENYIKTVTTT).

It belongs to the MAPEG family. As to quaternary structure, homotrimer. Interacts with LTC4S and ALOX5.

The protein localises to the nucleus membrane. It is found in the endoplasmic reticulum membrane. Required for leukotriene biosynthesis by ALOX5 (5-lipoxygenase). Anchors ALOX5 to the membrane. Binds arachidonic acid, and could play an essential role in the transfer of arachidonic acid to ALOX5. Binds to MK-886, a compound that blocks the biosynthesis of leukotrienes. This is Arachidonate 5-lipoxygenase-activating protein (ALOX5AP) from Macaca mulatta (Rhesus macaque).